A 249-amino-acid chain; its full sequence is Ditrans,polycis-undecaprenyl-diphosphate synthase ((2E,6E)-farnesyl-diphosphate specific) (249 aa).

Asp18 is a catalytic residue. Residue Asp18 participates in Mg(2+) binding. Substrate is bound by residues 19-22 (GNNR), Phe23, Lys31, His35, and 63-65 (SSE). The active-site Proton acceptor is the Asn66. Substrate contacts are provided by residues Trp67, Arg69, Arg186, and 192-194 (RLS). Glu205 is a binding site for Mg(2+).

This sequence belongs to the UPP synthase family. Homodimer. The cofactor is Mg(2+).

It carries out the reaction 8 isopentenyl diphosphate + (2E,6E)-farnesyl diphosphate = di-trans,octa-cis-undecaprenyl diphosphate + 8 diphosphate. Its function is as follows. Catalyzes the sequential condensation of isopentenyl diphosphate (IPP) with (2E,6E)-farnesyl diphosphate (E,E-FPP) to yield (2Z,6Z,10Z,14Z,18Z,22Z,26Z,30Z,34E,38E)-undecaprenyl diphosphate (di-trans,octa-cis-UPP). UPP is the precursor of glycosyl carrier lipid in the biosynthesis of bacterial cell wall polysaccharide components such as peptidoglycan and lipopolysaccharide. The sequence is that of Ditrans,polycis-undecaprenyl-diphosphate synthase ((2E,6E)-farnesyl-diphosphate specific) from Acinetobacter baylyi (strain ATCC 33305 / BD413 / ADP1).